Here is a 355-residue protein sequence, read N- to C-terminus: Peptide chain release factor 1 (355 aa).

Position 233 is an N5-methylglutamine (Gln-233).

This sequence belongs to the prokaryotic/mitochondrial release factor family. Methylated by PrmC. Methylation increases the termination efficiency of RF1.

It localises to the cytoplasm. Functionally, peptide chain release factor 1 directs the termination of translation in response to the peptide chain termination codons UAG and UAA. This chain is Peptide chain release factor 1, found in Bacillus cytotoxicus (strain DSM 22905 / CIP 110041 / 391-98 / NVH 391-98).